Consider the following 421-residue polypeptide: UPF0415 protein C7orf25 (421 aa).

This sequence belongs to the UPF0415 family.

The protein is UPF0415 protein C7orf25 (C7orf25) of Homo sapiens (Human).